Here is a 2471-residue protein sequence, read N- to C-terminus: Probable polyketide synthase 24 (2471 aa).

Positions 21–449 (ENLVAIVGVG…GSNCCLVLSQ (429 aa)) constitute a Ketosynthase family 3 (KS3) domain. Active-site for beta-ketoacyl synthase activity residues include cysteine 190, histidine 332, and histidine 372. An acyl/malonyl transferase region spans residues 654–687 (GIKASFMLGHSLGEVTTAYCSGMIDIDQLCYLIY). Residue serine 664 is the For acyl/malonyl transferase activity of the active site. An N-terminal hotdog fold region spans residues 953–1075 (ISILGNSMQD…SNFHLNSNDN (123 aa)). Residues 953–1245 (ISILGNSMQD…VKSLTPVKDP (293 aa)) form the PKS/mFAS DH domain. Histidine 987 acts as the Proton acceptor; for dehydratase activity in catalysis. The segment at 1094-1245 (NLSSIPWDEF…VKSLTPVKDP (152 aa)) is C-terminal hotdog fold. Aspartate 1157 functions as the Proton donor; for dehydratase activity in the catalytic mechanism. A coiled-coil region spans residues 1426–1469 (IINEQQQQQQQQQQQQQQQQQQQQQLLNNENNKESLKNLLVNCN). Residues 2336 to 2413 (SSSTNVKNKF…MVYQIINDSL (78 aa)) form the Carrier domain. An O-(pantetheine 4'-phosphoryl)serine modification is found at serine 2373.

The cofactor is pantetheine 4'-phosphate.

Its function is as follows. Probable polyketide synthase. The chain is Probable polyketide synthase 24 (pks24) from Dictyostelium discoideum (Social amoeba).